The sequence spans 774 residues: Lysyl oxidase homolog 2 (774 aa).

A signal peptide spans 1-25 (MERPLCSHLCSCLAVLALLSPLSLA). 4 SRCR domains span residues 58–159 (LRLA…VVCS), 188–302 (IRAI…VSCV), 326–425 (VRLR…VRCN), and 435–544 (LRLN…VACS). Cystine bridges form between cysteine 84–cysteine 148, cysteine 97–cysteine 158, cysteine 128–cysteine 138, cysteine 218–cysteine 291, cysteine 231–cysteine 301, cysteine 265–cysteine 275, cysteine 351–cysteine 414, cysteine 364–cysteine 424, and cysteine 395–cysteine 405. Asparagine 288 is a glycosylation site (N-linked (GlcNAc...) asparagine). An N-linked (GlcNAc...) asparagine glycan is attached at asparagine 455. 3 disulfide bridges follow: cysteine 464-cysteine 530, cysteine 477-cysteine 543, and cysteine 511-cysteine 521. Residues 548–751 (PDLVLNAEMV…WMYNCHIGGS (204 aa)) are lysyl-oxidase like. 2 residues coordinate Ca(2+): aspartate 549 and leucine 550. Intrachain disulfides connect cysteine 573–cysteine 625, cysteine 579–cysteine 695, cysteine 657–cysteine 673, and cysteine 663–cysteine 685. The Cu cation site is built by histidine 626, histidine 628, and histidine 630. A glycan (N-linked (GlcNAc...) asparagine) is linked at asparagine 644. A cross-link (lysine tyrosylquinone (Lys-Tyr)) is located at residues 653–689 (KASFCLEDTECEGDIQKNYECANFGDQGITMGCWDMY). Tyrosine 689 is subject to 2',4',5'-topaquinone. The Ca(2+) site is built by glutamate 722, aspartate 724, asparagine 727, and asparagine 728. Cysteine 732 and cysteine 746 are disulfide-bonded.

It belongs to the lysyl oxidase family. As to quaternary structure, component of some chromatin repressor complex. Interacts with SNAI1. Interacts with TAF10. Interacts with HSPA5. Interacts with EFEMP2. The cofactor is Cu cation. Requires lysine tyrosylquinone residue as cofactor. In terms of processing, the lysine tyrosylquinone cross-link (LTQ) is generated by condensation of the epsilon-amino group of a lysine with a topaquinone produced by oxidation of tyrosine. N-glycosylated. N-glycosylation on Asn-455 and Asn-644 may be essential for proper folding and secretion; may be composed of a fucosylated carbohydrates attached to a trimannose N-linked glycan core.

The protein resides in the secreted. It is found in the extracellular space. The protein localises to the extracellular matrix. Its subcellular location is the basement membrane. It localises to the nucleus. The protein resides in the chromosome. It is found in the endoplasmic reticulum. It carries out the reaction L-lysyl-[protein] + O2 + H2O = (S)-2-amino-6-oxohexanoyl-[protein] + H2O2 + NH4(+). Specifically inhibited by a mouse monoclonal antibody AB0023, inhibition occurs in a non-competitive manner. Functionally, mediates the post-translational oxidative deamination of lysine residues on target proteins leading to the formation of deaminated lysine (allysine). Acts as a transcription corepressor and specifically mediates deamination of trimethylated 'Lys-4' of histone H3 (H3K4me3), a specific tag for epigenetic transcriptional activation. Shows no activity against histone H3 when it is trimethylated on 'Lys-9' (H3K9me3) or 'Lys-27' (H3K27me3) or when 'Lys-4' is monomethylated (H3K4me1) or dimethylated (H3K4me2). Also mediates deamination of methylated TAF10, a member of the transcription factor IID (TFIID) complex, which induces release of TAF10 from promoters, leading to inhibition of TFIID-dependent transcription. LOXL2-mediated deamination of TAF10 results in transcriptional repression of genes required for embryonic stem cell pluripotency including POU5F1/OCT4, NANOG, KLF4 and SOX2. Involved in epithelial to mesenchymal transition (EMT) via interaction with SNAI1 and participates in repression of E-cadherin CDH1, probably by mediating deamination of histone H3. During EMT, involved with SNAI1 in negatively regulating pericentromeric heterochromatin transcription. SNAI1 recruits LOXL2 to pericentromeric regions to oxidize histone H3 and repress transcription which leads to release of heterochromatin component CBX5/HP1A, enabling chromatin reorganization and acquisition of mesenchymal traits. Interacts with the endoplasmic reticulum protein HSPA5 which activates the IRE1-XBP1 pathway of the unfolded protein response, leading to expression of several transcription factors involved in EMT and subsequent EMT induction. When secreted into the extracellular matrix, promotes cross-linking of extracellular matrix proteins by mediating oxidative deamination of peptidyl lysine residues in precursors to fibrous collagen and elastin. Acts as a regulator of sprouting angiogenesis, probably via collagen IV scaffolding. Acts as a regulator of chondrocyte differentiation, probably by regulating expression of factors that control chondrocyte differentiation. This Pongo abelii (Sumatran orangutan) protein is Lysyl oxidase homolog 2 (LOXL2).